The chain runs to 252 residues: 5-oxoprolinase subunit A (252 aa).

It belongs to the LamB/PxpA family. In terms of assembly, forms a complex composed of PxpA, PxpB and PxpC.

It carries out the reaction 5-oxo-L-proline + ATP + 2 H2O = L-glutamate + ADP + phosphate + H(+). Its function is as follows. Catalyzes the cleavage of 5-oxoproline to form L-glutamate coupled to the hydrolysis of ATP to ADP and inorganic phosphate. The protein is 5-oxoprolinase subunit A of Staphylococcus saprophyticus subsp. saprophyticus (strain ATCC 15305 / DSM 20229 / NCIMB 8711 / NCTC 7292 / S-41).